Consider the following 490-residue polypeptide: Cytochrome P450 2C14 (490 aa).

Cysteine 435 serves as a coordination point for heme.

Belongs to the cytochrome P450 family. Requires heme as cofactor.

It is found in the endoplasmic reticulum membrane. The protein resides in the microsome membrane. The catalysed reaction is an organic molecule + reduced [NADPH--hemoprotein reductase] + O2 = an alcohol + oxidized [NADPH--hemoprotein reductase] + H2O + H(+). Functionally, cytochromes P450 are a group of heme-thiolate monooxygenases. In liver microsomes, this enzyme is involved in an NADPH-dependent electron transport pathway. It oxidizes a variety of structurally unrelated compounds, including steroids, fatty acids, and xenobiotics. This Oryctolagus cuniculus (Rabbit) protein is Cytochrome P450 2C14 (CYP2C14).